The primary structure comprises 238 residues: MGKRIISQNRGRGTPTYRAPSHKYKAELRHPRVDENTSIQGKVINLEHDPARSAPIAKVVFETGEERLLLASEGIAVGSTIECGDDADVRPGNIVPIGKVPEGFFICNIESKPNDGGRFVRSSGVYATVVTHESNRTAVAMPSGNIKWLNPKCRAVVGIVAGGGRVDRPWLKAGKKYHKMKTRAAKYPRVSGVAMNPVDHPFGGGAWKHPGKPTTVSRNAPPGRKVGLIAARRTGMKR.

The interval 203-223 (GGGAWKHPGKPTTVSRNAPPG) is disordered.

It belongs to the universal ribosomal protein uL2 family. As to quaternary structure, part of the 50S ribosomal subunit. Forms a bridge to the 30S subunit in the 70S ribosome.

Functionally, one of the primary rRNA binding proteins. Required for association of the 30S and 50S subunits to form the 70S ribosome, for tRNA binding and peptide bond formation. It has been suggested to have peptidyltransferase activity; this is somewhat controversial. Makes several contacts with the 16S rRNA in the 70S ribosome. This chain is Large ribosomal subunit protein uL2, found in Methanosarcina barkeri (strain Fusaro / DSM 804).